Here is a 167-residue protein sequence, read N- to C-terminus: Probable D-lyxose ketol-isomerase (167 aa).

Mn(2+)-binding residues include histidine 69, histidine 71, glutamate 82, and histidine 137.

The protein belongs to the D-lyxose ketol-isomerase family. Homodimer. The cofactor is Mn(2+).

It carries out the reaction D-lyxose = D-xylulose. Functionally, sugar isomerase that catalyzes the reversible isomerization of D-lyxose to D-xylulose. This is Probable D-lyxose ketol-isomerase (ydaE) from Bacillus subtilis (strain 168).